Reading from the N-terminus, the 355-residue chain is Molybdenum import ATP-binding protein ModC (355 aa).

An ABC transporter domain is found at 1 to 233 (MTLIVEAKQR…PSTASDRREA (233 aa)). 31-38 (GRSGSGKT) contacts ATP. A Mop domain is found at 291-355 (GLSALNILEA…AIIKTVALEA (65 aa)).

Belongs to the ABC transporter superfamily. Molybdate importer (TC 3.A.1.8) family. In terms of assembly, the complex is composed of two ATP-binding proteins (ModC), two transmembrane proteins (ModB) and a solute-binding protein (ModA).

The protein resides in the cell inner membrane. The catalysed reaction is molybdate(out) + ATP + H2O = molybdate(in) + ADP + phosphate + H(+). Functionally, part of the ABC transporter complex ModABC involved in molybdenum import. Responsible for energy coupling to the transport system. The sequence is that of Molybdenum import ATP-binding protein ModC from Rhizobium johnstonii (strain DSM 114642 / LMG 32736 / 3841) (Rhizobium leguminosarum bv. viciae).